The following is a 190-amino-acid chain: Guanylate kinase (190 aa).

The Guanylate kinase-like domain occupies 7–186 (GKLIVFSAPS…AVDDVEAAIV (180 aa)). Residue 14-21 (APSGAGKT) coordinates ATP.

The protein belongs to the guanylate kinase family.

The protein localises to the cytoplasm. The enzyme catalyses GMP + ATP = GDP + ADP. Essential for recycling GMP and indirectly, cGMP. The chain is Guanylate kinase from Chlorobium chlorochromatii (strain CaD3).